We begin with the raw amino-acid sequence, 264 residues long: ORC1-type DNA replication protein 2 (264 aa).

ATP-binding positions include 73–77, Tyr220, and Arg232; that span reads TGKSL.

It belongs to the CDC6/cdc18 family.

Involved in regulation of DNA replication. The polypeptide is ORC1-type DNA replication protein 2 (orc2) (Halobacterium salinarum (strain ATCC 700922 / JCM 11081 / NRC-1) (Halobacterium halobium)).